Consider the following 593-residue polypeptide: ATPase family AAA domain-containing protein 3-B (593 aa).

3 disordered regions span residues 1 to 64, 109 to 129, and 145 to 164; these read MSWL…LDQS, EEKR…AQYQ, and QLQN…KQEA. At 1-242 the chain is on the mitochondrial intermembrane side; the sequence is MSWLFGLNRG…FRTFISDWDK (242 aa). The segment covering 12–27 has biased composition (pro residues); the sequence is PEPPGVPGFPEPPSPP. Composition is skewed to basic and acidic residues over residues 33-44, 53-64, 109-121, and 150-164; these read GGDKNRPKDKWS, RAAKAARELDQS, EEKR…ETKQ, and ENLR…KQEA. Positions 51–215 form a coiled coil; it reads LERAAKAARE…QIRLKAAEHR (165 aa). The helical transmembrane segment at 243 to 260 threads the bilayer; sequence VTATVAGLTLLAVGVYTA. Residues 261–593 are Mitochondrial matrix-facing; it reads KNGTGVAGRY…LQPLLEGTPV (333 aa). 348 to 355 provides a ligand contact to ATP; the sequence is GPPGTGKT. Positions 570 to 580 are enriched in basic and acidic residues; it reads AEGKESTKEIG. The tract at residues 570–593 is disordered; it reads AEGKESTKEIGKNPLQPLLEGTPV.

Belongs to the AAA ATPase family. Can form homooligomers. Homodimer formation at the N-terminus may be regulated by ATP and is required for the interaction with the inner surface of the mitochondrial outer membrane and correct mitochondrial homeostasis.

It is found in the mitochondrion inner membrane. Its subcellular location is the mitochondrion matrix. The protein resides in the mitochondrion nucleoid. It carries out the reaction ATP + H2O = ADP + phosphate + H(+). Essential for mitochondrial network organization, mitochondrial metabolism and cell growth at organism and cellular level. May play an important role in mitochondrial protein synthesis. May also participate in mitochondrial DNA replication. May bind to mitochondrial DNA D-loops and contribute to nucleoid stability. Required for enhanced channeling of cholesterol for hormone-dependent steroidogenesis. Involved in mitochondrial-mediated antiviral innate immunity. Required to protect mitochondria from the PERK-mediated unfolded protein response: specifically inhibits the activity of EIF2AK3/PERK at mitochondria-endoplasmic reticulum contact sites, thereby providing a safe haven for mitochondrial protein translation during endoplasmic reticulum stress. Ability to inhibit EIF2AK3/PERK is independent of its ATPase activity. Also involved in the mitochondrial DNA damage response by promoting signaling between damaged genomes and the mitochondrial membrane, leading to activation of the integrated stress response (ISR). This is ATPase family AAA domain-containing protein 3-B (atad3-b) from Xenopus laevis (African clawed frog).